The sequence spans 1442 residues: Protein patched homolog 1 (1442 aa).

Residues 1 to 45 (MASAADALEPESGSSTAGGGSHPVRAARSARGRRRRSGGTRRAAA) are disordered. The Cytoplasmic segment spans residues 1–101 (MASAADALEP…GCYIQKNCGK (101 aa)). Residues 28 to 39 (RSARGRRRRSGG) are compositionally biased toward basic residues. Residues 102-122 (FLVVGLLYSAFAVGLRAANLE) form a helical membrane-spanning segment. Over 123-436 (TNVEELWVEV…LDDILKSFSD (314 aa)) the chain is Extracellular. Residues N141, N312, N349, and N414 are each glycosylated (N-linked (GlcNAc...) asparagine). A helical membrane pass occupies residues 437–457 (VSVIRVASGYLLMLAYACLTM). The 161-residue stretch at 438–598 (SVIRVASGYL…LLIFPAILSM (161 aa)) folds into the SSD domain. At 458–472 (LRWDCAKSQGAVGLA) the chain is on the cytoplasmic side. A helical membrane pass occupies residues 473 to 493 (GVLLVALSVAAGLGLCSLIGI). The Extracellular portion of the chain corresponds to 494-501 (SFNAATTQ). Residues 502–522 (VLPFLALGVGVDDVFLLAHAF) traverse the membrane as a helical segment. The Cytoplasmic portion of the chain corresponds to 523 to 547 (SETGQNKRIPFEDRTGECLKRTGAS). A helical membrane pass occupies residues 548 to 568 (VALTSISNVTAFFMAALIPIP). Residues 569-577 (ALRAFSLQA) are Extracellular-facing. The chain crosses the membrane as a helical span at residues 578 to 598 (AVVVVFNFAMVLLIFPAILSM). Topologically, residues 599–747 (DLYRREDRRL…HYAPFLLKPK (149 aa)) are cytoplasmic. Residues 748-768 (AKVVVIFLFLGLLGLSLYGTT) traverse the membrane as a helical segment. Residues 769-1026 (RVRDGLDLTD…WEQYIGLRHW (258 aa)) lie on the Extracellular side of the membrane. Residues N827, N874, and N999 are each glycosylated (N-linked (GlcNAc...) asparagine). The chain crosses the membrane as a helical span at residues 1027–1047 (LLLSISVVLACTFLVCALFLL). Topologically, residues 1048–1053 (NPWTAG) are cytoplasmic. A helical membrane pass occupies residues 1054-1074 (IIVVVLALMTVELFGMMGLIG). The Extracellular segment spans residues 1075–1082 (IKLSAVPV). Residues 1083–1101 (VILIASVGIGVEFTVHIAL) form a helical membrane-spanning segment. The Cytoplasmic portion of the chain corresponds to 1102-1120 (AFLTAIGDKNRRAVLALEH). The helical transmembrane segment at 1121–1141 (MFAPVLDGAVSTLLGVLMLAG) threads the bilayer. At 1142–1153 (SEFDFIVRYFFA) the chain is on the extracellular side. Residues 1154–1174 (VLAILTILGVLNGLVLLPVLL) form a helical membrane-spanning segment. Residues 1175–1442 (SFFGPYPEVS…EERTAGKISE (268 aa)) are Cytoplasmic-facing. Disordered stretches follow at residues 1188-1231 (GRNR…TTVS) and 1266-1338 (STVV…LNHK). The segment covering 1217-1226 (SDSSDSEYSS) has biased composition (low complexity). Residues 1276–1293 (QSSPRLQSNPEAGTQQVW) show a composition bias toward polar residues.

Belongs to the patched family. Post-translationally, glycosylation is necessary for SHH binding. Expression is seen in the embryonic neural tube, sclerotome, visceral mesoderm, and limb bud.

The protein localises to the membrane. In terms of biological role, acts as a receptor for sonic hedgehog (SHH), indian hedgehog (IHH) and desert hedgehog (DHH). Associates with the smoothened protein (SMO) to transduce the hedgehog's proteins signal. The sequence is that of Protein patched homolog 1 (PTCH1) from Gallus gallus (Chicken).